The chain runs to 256 residues: Trans-aconitate 2-methyltransferase (256 aa).

Belongs to the methyltransferase superfamily. Tam family.

Its subcellular location is the cytoplasm. The catalysed reaction is trans-aconitate + S-adenosyl-L-methionine = (E)-3-(methoxycarbonyl)pent-2-enedioate + S-adenosyl-L-homocysteine. Functionally, catalyzes the S-adenosylmethionine monomethyl esterification of trans-aconitate. The chain is Trans-aconitate 2-methyltransferase from Rhodopseudomonas palustris (strain BisB18).